The chain runs to 669 residues: Dymeclin (669 aa).

Gly-2 carries N-myristoyl glycine lipidation.

This sequence belongs to the dymeclin family. Interacts with GOLM1 and PPIB. Myristoylated in vitro; myristoylation is not essential for protein targeting to Golgi compartment.

Its subcellular location is the cytoplasm. It is found in the golgi apparatus. The protein localises to the membrane. Functionally, necessary for correct organization of Golgi apparatus. Involved in bone development. This Mus musculus (Mouse) protein is Dymeclin (Dym).